Consider the following 113-residue polypeptide: Protein Asterix (113 aa).

Residues 81-97 form a helical membrane-spanning segment; it reads IVSSFMLSVSAVVMSYL.

It belongs to the Asterix family.

It is found in the membrane. The sequence is that of Protein Asterix from Caenorhabditis elegans.